Here is a 1235-residue protein sequence, read N- to C-terminus: Chitin synthase 4 (1235 aa).

Residues 1–11 (MSLPRRPGPSP) show a composition bias toward pro residues. Residues 1–203 (MSLPRRPGPS…ASKGKREKSG (203 aa)) are disordered. The Cytoplasmic portion of the chain corresponds to 1 to 212 (MSLPRRPGPS…GGLPTPSFWN (212 aa)). Basic residues predominate over residues 19–28 (YRQSGSRRSR). Residues 46 to 59 (PSQQQRVPSISSFP) show a composition bias toward polar residues. The segment covering 94-107 (IRPERNRIGKDHPN) has biased composition (basic and acidic residues). Residues 116–125 (NMNTLPSSTG) are compositionally biased toward polar residues. Over residues 169–187 (ETEKSGDERRRRRKSDTTK) the composition is skewed to basic and acidic residues. Residues 188–199 (HGKIVKASKGKR) show a composition bias toward basic residues. The helical transmembrane segment at 213–233 (IYCGFVTFWCPGFVLKCFGMP) threads the bilayer. Over 234–244 (EMAQQRAWREK) the chain is Extracellular. The chain crosses the membrane as a helical span at residues 245–265 (MGLISIILLIMGFVGFITFGF). The Cytoplasmic segment spans residues 266 to 514 (TQVVCGKPPL…ASKVVLYVSL (249 aa)). A helical membrane pass occupies residues 515–535 (VLILAVVLARFVLALIFQWFI). Over 536–1065 (SKTYAAAKTS…SMQFIVGIEL (530 aa)) the chain is Extracellular. The segment at 545–592 (SQTSDQRKRNRQIEDWTEDIYRAPPRLPGEVGSSVAGSSDRQSKRSSA) is disordered. The span at 549 to 558 (DQRKRNRQIE) shows a compositional bias: basic and acidic residues. The N-linked (GlcNAc...) asparagine glycan is linked to Asn639. The segment at 645–670 (FLKSDAYGSSSSPADGPGPAGFIHEA) is disordered. The segment covering 648-665 (SDAYGSSSSPADGPGPAG) has biased composition (low complexity). A glycan (N-linked (GlcNAc...) asparagine) is linked at Asn1034. The chain crosses the membrane as a helical span at residues 1066 to 1086 (IGTLVLPAAIAFTFYVVIISI). Over 1087 to 1092 (INSPPQ) the chain is Cytoplasmic. A helical membrane pass occupies residues 1093-1113 (IIPLVLLGLILGLPAILVVVT). Topologically, residues 1114-1116 (AHS) are extracellular. Residues 1117 to 1137 (WSYIIWMFIYLLSLPVWNFVL) traverse the membrane as a helical segment. The Cytoplasmic segment spans residues 1138–1235 (PTYAFWKFDD…RHFDDYFSDA (98 aa)). Residues 1201-1235 (RDNVISGVGGSNGWGSSQPRGHEQGRHFDDYFSDA) are disordered. Positions 1220 to 1235 (RGHEQGRHFDDYFSDA) are enriched in basic and acidic residues.

This sequence belongs to the chitin synthase family. Class IV subfamily.

It is found in the cell membrane. The catalysed reaction is [(1-&gt;4)-N-acetyl-beta-D-glucosaminyl](n) + UDP-N-acetyl-alpha-D-glucosamine = [(1-&gt;4)-N-acetyl-beta-D-glucosaminyl](n+1) + UDP + H(+). In terms of biological role, polymerizes chitin, a structural polymer of the cell wall and septum, by transferring the sugar moiety of UDP-GlcNAc to the non-reducing end of the growing chitin polymer. The polypeptide is Chitin synthase 4 (chs-4) (Neurospora crassa (strain ATCC 24698 / 74-OR23-1A / CBS 708.71 / DSM 1257 / FGSC 987)).